The chain runs to 323 residues: GMP reductase (323 aa).

The Thioimidate intermediate role is filled by cysteine 174. Residue 203–226 (IIADGGIRHNGDIAKSVRFGASMV) coordinates NADP(+).

The protein belongs to the IMPDH/GMPR family. GuaC type 2 subfamily.

It carries out the reaction IMP + NH4(+) + NADP(+) = GMP + NADPH + 2 H(+). Catalyzes the irreversible NADPH-dependent deamination of GMP to IMP. It functions in the conversion of nucleobase, nucleoside and nucleotide derivatives of G to A nucleotides, and in maintaining the intracellular balance of A and G nucleotides. In Oenococcus oeni (strain ATCC BAA-331 / PSU-1), this protein is GMP reductase.